We begin with the raw amino-acid sequence, 458 residues long: UDP-N-acetylmuramate--L-alanine ligase (458 aa).

118-124 serves as a coordination point for ATP; it reads GTHGKTT.

It belongs to the MurCDEF family.

It localises to the cytoplasm. It carries out the reaction UDP-N-acetyl-alpha-D-muramate + L-alanine + ATP = UDP-N-acetyl-alpha-D-muramoyl-L-alanine + ADP + phosphate + H(+). The protein operates within cell wall biogenesis; peptidoglycan biosynthesis. Functionally, cell wall formation. This chain is UDP-N-acetylmuramate--L-alanine ligase, found in Clostridium botulinum (strain Langeland / NCTC 10281 / Type F).